The primary structure comprises 1671 residues: Hybrid signal transduction protein dokA (1671 aa).

Over residues 1–10 the composition is skewed to basic and acidic residues; sequence MSSPHIELHS. Disordered stretches follow at residues 1–27, 42–89, 126–241, 365–451, 579–603, and 629–651; these read MSSP…ELTG, DDLN…DKND, QQQQ…RRSS, YSNN…NNEE, HNHN…SPFI, and SNSS…SSNA. A compositionally biased stretch (polar residues) spans 11-27; that stretch reads QRTLSPQPSSNNFELTG. 2 stretches are compositionally biased toward low complexity: residues 45–83 and 126–167; these read NNNN…NNNN and QQQQ…QQQE. A compositionally biased stretch (acidic residues) spans 168-179; it reads QEQEQEQEQEQE. Low complexity predominate over residues 367 to 449; it reads NNNNNTNTNN…NNNNNNNNNN (83 aa). The span at 591–600 shows a compositional bias: polar residues; the sequence is TTQRASSTDS. The Histidine kinase domain occupies 1050-1276; sequence NISHELRTPC…TFWFAIKVSI (227 aa). Residues 1519-1633 enclose the Response regulatory domain; sequence YILVAEDNDI…RLQKTLSDWI (115 aa).

Post-translationally, under osmotic stress conditions, this protein undergoes phosphorylation at a serine residue in the kinase core, which is not due to an autophosphorylation of dokA. This is in contrast to the classic two-component paradigm, which predicts only histidine and aspartate phosphorylation.

Its function is as follows. Part of the osmoregulatory pathway which leads to the increase of intracellular cAMP concentration in response to hyperosmotic stress. Thought to negatively regulate the rdeA-regA pathway by acting as a phosphatase towards the HPt protein rdeA. Has probably no histidine kinase activity. The chain is Hybrid signal transduction protein dokA (dokA) from Dictyostelium discoideum (Social amoeba).